The sequence spans 335 residues: Phosphate acyltransferase (335 aa).

It belongs to the PlsX family. As to quaternary structure, homodimer. Probably interacts with PlsY.

The protein localises to the cytoplasm. It catalyses the reaction a fatty acyl-[ACP] + phosphate = an acyl phosphate + holo-[ACP]. It functions in the pathway lipid metabolism; phospholipid metabolism. Functionally, catalyzes the reversible formation of acyl-phosphate (acyl-PO(4)) from acyl-[acyl-carrier-protein] (acyl-ACP). This enzyme utilizes acyl-ACP as fatty acyl donor, but not acyl-CoA. In Streptococcus pyogenes serotype M6 (strain ATCC BAA-946 / MGAS10394), this protein is Phosphate acyltransferase.